The primary structure comprises 464 residues: MTSYALLHTQRVTAKNGEVFTISPDLWERNQQQQSLLLRYFALPLKEENNRLWLGVDSLSNLSACETIAFITGKPVEPILLESSQLKELLQQLTPNQMQVEEQVKFYQHQETHFEQEDDEPVIRLLNQIFESALQKNASDIHLETLADQFQVRFRIDGVLQPQPLISKIFANRIISRLKLLAKLDISENRLPQDGRFQFKTTFSDILDFRLSTLPTHWGEKIVLRAQQNKPVELSFSELGMTENQQQAFQRVLSQPQGLILVTGPTGSGKSISLYTALQWLNTPDKHIMTAEDPIEIELDGIIQSQINPQIGLDFNRLLRTFLRQDPDIIMLGEIRDEESAMIALRAAQTGHLVLSTLHTNDAISAISRLQQLGIQQYEIKNSLLLVIAQRLVRKLCSKCGGNLANSCDCHQGYRGRIGVYQFLHWQQNDYQTDFKNLRASGLEKVSQGITDEKEIERVLGKNL.

Residue Gly-264–Ser-271 coordinates ATP.

Belongs to the GSP E family.

This chain is Protein transport protein HofB homolog (hofB), found in Haemophilus influenzae (strain ATCC 51907 / DSM 11121 / KW20 / Rd).